The following is a 200-amino-acid chain: MAHPFTLLVTVGSTLFPSLTSHVLLPTFLSLLQSLGVQRLVVQYGRAELKLQDDVKQTLNIDSQGDGIGVWSDNDGDRVRDEKQNGMVVEVMRFTNDFEGLVGKSDAVISHAGSGSILTVLRRAPPIPLLVVPNRSLMDDHQSELADALYKDGYVMVASVEDLEEKVQPFLKIWPSQAKLFPETRKEVFREVVDDLMGYD.

This sequence belongs to the glycosyltransferase 28 family. As to quaternary structure, heterodimer with ALG14 to form a functional enzyme.

The protein localises to the endoplasmic reticulum. It carries out the reaction an N-acetyl-alpha-D-glucosaminyl-diphospho-di-trans,poly-cis-dolichol + UDP-N-acetyl-alpha-D-glucosamine = an N,N'-diacetylchitobiosyl-diphospho-di-trans,poly-cis-dolichol + UDP + H(+). Its function is as follows. Involved in protein N-glycosylation. Essential for the second step of the dolichol-linked oligosaccharide pathway. This Cryptococcus neoformans var. neoformans serotype D (strain B-3501A) (Filobasidiella neoformans) protein is UDP-N-acetylglucosamine transferase subunit ALG13 (ALG13).